The primary structure comprises 1151 residues: Cation channel sperm-associated protein subunit gamma 1 (1151 aa).

The signal sequence occupies residues methionine 1–alanine 38. Residues glutamate 39–serine 1063 are Extracellular-facing. Residue asparagine 356 is glycosylated (N-linked (GlcNAc...) asparagine). The chain crosses the membrane as a helical span at residues phenylalanine 1064–cysteine 1084. The Cytoplasmic segment spans residues leucine 1085–alanine 1151. The span at serine 1113–serine 1123 shows a compositional bias: low complexity. The disordered stretch occupies residues serine 1113 to alanine 1151.

The protein belongs to the CATSPERG family.

It is found in the membrane. This chain is Cation channel sperm-associated protein subunit gamma 1 (Catsperg1), found in Mus musculus (Mouse).